We begin with the raw amino-acid sequence, 270 residues long: Glutamate racemase (270 aa).

Residues 14–15 (DS) and 46–47 (YG) each bind substrate. Cysteine 77 acts as the Proton donor/acceptor in catalysis. 78–79 (NT) is a binding site for substrate. Cysteine 189 functions as the Proton donor/acceptor in the catalytic mechanism. 190 to 191 (TH) is a binding site for substrate.

This sequence belongs to the aspartate/glutamate racemases family.

The catalysed reaction is L-glutamate = D-glutamate. Its pathway is cell wall biogenesis; peptidoglycan biosynthesis. Its function is as follows. Provides the (R)-glutamate required for cell wall biosynthesis. This is Glutamate racemase from Neisseria meningitidis serogroup A / serotype 4A (strain DSM 15465 / Z2491).